A 344-amino-acid chain; its full sequence is 4-hydroxy-3-methylbut-2-en-1-yl diphosphate synthase (flavodoxin) (344 aa).

[4Fe-4S] cluster is bound by residues C253, C256, C288, and E295.

It belongs to the IspG family. The cofactor is [4Fe-4S] cluster.

The enzyme catalyses (2E)-4-hydroxy-3-methylbut-2-enyl diphosphate + oxidized [flavodoxin] + H2O + 2 H(+) = 2-C-methyl-D-erythritol 2,4-cyclic diphosphate + reduced [flavodoxin]. Its pathway is isoprenoid biosynthesis; isopentenyl diphosphate biosynthesis via DXP pathway; isopentenyl diphosphate from 1-deoxy-D-xylulose 5-phosphate: step 5/6. Functionally, converts 2C-methyl-D-erythritol 2,4-cyclodiphosphate (ME-2,4cPP) into 1-hydroxy-2-methyl-2-(E)-butenyl 4-diphosphate. The chain is 4-hydroxy-3-methylbut-2-en-1-yl diphosphate synthase (flavodoxin) from Thermotoga petrophila (strain ATCC BAA-488 / DSM 13995 / JCM 10881 / RKU-1).